The primary structure comprises 216 residues: CRIB domain-containing protein RIC7 (216 aa).

In terms of domain architecture, CRIB spans 36 to 49 (IGNPTDVKHVAHIG). Residues 52–216 (GPSDNATAPS…PQFEDDRNGF (165 aa)) form a disordered region. A compositionally biased stretch (basic and acidic residues) spans 108–121 (SSSEKGSPTKERSD).

In terms of assembly, interacts with ARAC4/ROP2 and ARAC11/ROP1. In terms of tissue distribution, expressed in roots, leaves, guard cells, stems, flowers, siliques and pollen.

It localises to the nucleus. The protein resides in the cytoplasm. It is found in the cell membrane. In terms of biological role, functions as a downstream effector of Rho-related GTP binding proteins of the 'Rho of Plants' (ROPs) family. Participates in the propagation of ROP GTPase signals in specific cellular responses. Functions as a downstream effector of active ARAC4/ROP2 GTPase which is involved in the prevention of excessive stomatal opening upon light stimulation. Is involved in pollen tube growth regulation through its interaction with ARAC11/ROP1. The protein is CRIB domain-containing protein RIC7 (RIC7) of Arabidopsis thaliana (Mouse-ear cress).